Here is a 321-residue protein sequence, read N- to C-terminus: Transmembrane protein fend (321 aa).

The first 18 residues, 1–18 (MFHSLVLMACALAALSVA), serve as a signal peptide directing secretion. Residues 19–261 (QGAGSARSKS…ALPTPSELGG (243 aa)) lie on the Extracellular side of the membrane. Residues 262 to 282 (VVYPAFGALAFFLALLVMFLF) traverse the membrane as a helical segment. The Cytoplasmic segment spans residues 283-321 (LRPQRKRFPLDADSADTATLIGRSSSSSRNSMDASTLHV).

It is found in the membrane. In terms of biological role, involved in the normal targeting of ventral muscle, muscle 12, by motoneurons. May function as an axon guidance molecule involved in neuromuscular specificity. The protein is Transmembrane protein fend (fend) of Drosophila melanogaster (Fruit fly).